The following is a 635-amino-acid chain: Threonine--tRNA ligase (635 aa).

One can recognise a TGS domain in the interval 1 to 61; that stretch reads MVSIRLPDGS…DHDVALAIVT (61 aa). Positions 242–533 are catalytic; it reads DHRKLGKQLD…LIEHHAGAMP (292 aa). Residues Cys-333, His-384, and His-510 each contribute to the Zn(2+) site.

It belongs to the class-II aminoacyl-tRNA synthetase family. In terms of assembly, homodimer. It depends on Zn(2+) as a cofactor.

The protein localises to the cytoplasm. It catalyses the reaction tRNA(Thr) + L-threonine + ATP = L-threonyl-tRNA(Thr) + AMP + diphosphate + H(+). Catalyzes the attachment of threonine to tRNA(Thr) in a two-step reaction: L-threonine is first activated by ATP to form Thr-AMP and then transferred to the acceptor end of tRNA(Thr). Also edits incorrectly charged L-seryl-tRNA(Thr). The chain is Threonine--tRNA ligase from Paraburkholderia xenovorans (strain LB400).